A 938-amino-acid chain; its full sequence is MEVCCCSTSSAVPGRRFAAAGAAAAAVAARWGAVGVGRAVVLAHPLRPAPRGGHAHAQQAGARRARRAVVRAVFERFTERAVKAVVLSQREAKGLGEGAVAPRHLLLGLIAEDRSAGGFLSSGINIERAREECRGIGARDLTPGAPSPSGSGLEMDIPFSGSCKRVFEVAVEFSRNMGCSFISPEHLALALFTLDDPTTNSLLRSLGADPSQLASVALTRLQAELAKDCREPAGASSFKVPKKSPAGAGRSAFSKSLNSKKEKGALDQFCLDLTTQASGGFIDPIIGREEEIERVVQIICRRTKNNPILLGEAGVGKTAIAEGLALRIANGDVPIYLVAKRIMSLDVGLLIAGAKERGELESRVTSLIREVREAGDVILFIDEVHNLIGSGTVGKGKGAGLDIGNLLKPPLARGELQCIAATTLDEHRMHFEKDKALARRFQPVLVEEPSQDDAVKILLGLREKYETYHKCKFTLEAINAAVYLSARYIPDRQLPDKAIDLIDEAGSRARMESFNRKKEGQSSILLKSPDEYWQEIRAAQNMHEVVSSNQMKYSPRQENGSAAIKAPSEDMNELTSELQVEEPIVVGTEEIARVASLWSGIPVQQLTADDRKLLVGLDGELRKRVIGQDDAVMAISRAVKRSRVGLNDPDRPIATLLFCGPTGVGKTELTKALAASYFGSESAMLRLDMSEYMERHTVSKLIGSPPGYIGYGETGTLTEAVRRKPFTVVLLDEIEKAHPDIFNILLQIFEDGHLSDSQGRRVSFKNTLIVMTSNIGSTSISKGRRSMGFMTEDTESSSYVAMKSLVMEELKAFFRPELLNRIDEMVVFRPLEKTQMLAILDIILQEVKGRLLALGIGLEVSDAMKDLICEEGYDKSYGARPLRRAVTHLIEDVISEAILFGEYKPGDTILMDIDAGGKLCMSHLNEKVVQLSDPTRTF.

The N-terminal 83 residues, 1 to 83, are a transit peptide targeting the chloroplast; that stretch reads MEVCCCSTSS…FERFTERAVK (83 aa). Repeat stretches follow at residues 84 to 145 and 159 to 224; these read AVVL…TPGA and FSGS…LQAE. The Clp R domain maps to 84 to 224; sequence AVVLSQREAK…SVALTRLQAE (141 aa). The disordered stretch occupies residues 234–255; it reads GASSFKVPKKSPAGAGRSAFSK. Positions 266–519 are i; it reads LDQFCLDLTT…RMESFNRKKE (254 aa). ATP-binding positions include 311–318 and 660–667; these read GEAGVGKT and GPTGVGKT. Residues 586–777 are II; that stretch reads VGTEEIARVA…LIVMTSNIGS (192 aa).

Belongs to the ClpA/ClpB family. ClpD subfamily. In terms of tissue distribution, expressed in stems, culms and leaves.

The protein resides in the plastid. It localises to the chloroplast. In terms of biological role, molecular chaperone that may function in heat stress response. May interact with a ClpP-like protease involved in degradation of denatured proteins in the chloroplast. Chaperone involved in response to abiotic stresses. Plays a positive role during dehydration and salt stress. In Oryza sativa subsp. japonica (Rice), this protein is Chaperone protein ClpD1, chloroplastic.